The sequence spans 467 residues: Glutamate--tRNA ligase (467 aa).

The 'HIGH' region signature appears at 9–19 (PSPTGFLHIGG). A 'KMSKS' region motif is present at residues 250 to 254 (KLSKR). Position 253 (K253) interacts with ATP.

It belongs to the class-I aminoacyl-tRNA synthetase family. Glutamate--tRNA ligase type 1 subfamily. Monomer.

The protein localises to the cytoplasm. It catalyses the reaction tRNA(Glu) + L-glutamate + ATP = L-glutamyl-tRNA(Glu) + AMP + diphosphate. Its function is as follows. Catalyzes the attachment of glutamate to tRNA(Glu) in a two-step reaction: glutamate is first activated by ATP to form Glu-AMP and then transferred to the acceptor end of tRNA(Glu). The protein is Glutamate--tRNA ligase of Mesomycoplasma hyopneumoniae (strain 232) (Mycoplasma hyopneumoniae).